Consider the following 151-residue polypeptide: Small ribosomal subunit protein uS15 (151 aa).

The protein belongs to the universal ribosomal protein uS15 family. Component of the small ribosomal subunit.

The protein resides in the cytoplasm. Component of the small ribosomal subunit. The ribosome is a large ribonucleoprotein complex responsible for the synthesis of proteins in the cell. In Xenopus laevis (African clawed frog), this protein is Small ribosomal subunit protein uS15 (rps13).